Consider the following 1322-residue polypeptide: Protein fantom (1322 aa).

The signal sequence occupies residues 1–22 (MVSARYPIEKWSRPQLEDHFHN). The stretch at 15–89 (QLEDHFHNVV…MKLKAAKQQL (75 aa)) forms a coiled coil. The segment covering 108 to 119 (RSTFRQPPSTFR) has biased composition (polar residues). Disordered regions lie at residues 108–151 (RSTF…GEKL), 189–275 (KSSV…PDQT), and 392–418 (RIEE…SQSE). Over residues 195–217 (SSPPTRLSTSSSSKSSSSNNNND) the composition is skewed to low complexity. A compositionally biased stretch (acidic residues) spans 224-234 (ELEEMSEMSDD). Positions 274 to 362 (QTEKVLLDKL…EDQKKFEAMR (89 aa)) form a coiled coil. Residues 456-538 (ASENSLARWQ…FMLEEQIRTI (83 aa)) adopt a coiled-coil conformation. Disordered regions lie at residues 891 to 1094 (AELH…KPRN) and 1121 to 1149 (TDPL…PVPL). Positions 918–927 (TDSSDTSFSH) are enriched in low complexity. Positions 956–975 (SDGEEEADRIVFDDDDDEIE) are enriched in acidic residues. A compositionally biased stretch (basic and acidic residues) spans 984-996 (RDPEPLEVPERQV). The span at 1015 to 1029 (NGTNESKESTPVTQR) shows a compositional bias: polar residues. Over residues 1042–1067 (PELEPESGPEPEPVVESEPNEVAETE) the composition is skewed to acidic residues. Residues 1068 to 1080 (EDRKRELKTEELK) are compositionally biased toward basic and acidic residues. Positions 1127 to 1139 (SVPPSESSSTSSP) are enriched in low complexity.

Belongs to the RPGRIP1 family. In terms of tissue distribution, expressed at the transition zone at the base of cilia. Expressed in ciliated sensory neurons, including the amphid neurons in the head.

The protein resides in the cell projection. The protein localises to the cilium. In terms of biological role, thought to have an important role in cilia formation and cilia-mediated chemosensation. Involved in the docking of other MKS/MKSR proteins localized to the transition zone of the cilia. The polypeptide is Protein fantom (mks-5) (Caenorhabditis elegans).